Here is a 308-residue protein sequence, read N- to C-terminus: Ankyrin repeat and SOCS box protein 12 (308 aa).

5 ANK repeats span residues 63-92 (IPGT…DVDS), 96-125 (KAQT…CPSG), 129-158 (NNCS…EANV), 171-200 (SCSG…DPDY), and 213-243 (QPRT…NIYL). In terms of domain architecture, SOCS box spans 268–308 (PRSLLSQTRLVIRRSLCRANQSQATDQLDIPPVLISYLKHQ).

The protein belongs to the ankyrin SOCS box (ASB) family. In terms of assembly, interacts with CUL5 and RNF7.

The protein operates within protein modification; protein ubiquitination. Its function is as follows. Probable substrate-recognition component of a SCF-like ECS (Elongin-Cullin-SOCS-box protein) E3 ubiquitin-protein ligase complex which mediates the ubiquitination and subsequent proteasomal degradation of target proteins. The protein is Ankyrin repeat and SOCS box protein 12 (Asb12) of Mus musculus (Mouse).